A 438-amino-acid chain; its full sequence is Methylenetetrahydrofolate--tRNA-(uracil-5-)-methyltransferase TrmFO (438 aa).

10–15 (GGGLAG) lines the FAD pocket.

This sequence belongs to the MnmG family. TrmFO subfamily. Requires FAD as cofactor.

It localises to the cytoplasm. It carries out the reaction uridine(54) in tRNA + (6R)-5,10-methylene-5,6,7,8-tetrahydrofolate + NADH + H(+) = 5-methyluridine(54) in tRNA + (6S)-5,6,7,8-tetrahydrofolate + NAD(+). The catalysed reaction is uridine(54) in tRNA + (6R)-5,10-methylene-5,6,7,8-tetrahydrofolate + NADPH + H(+) = 5-methyluridine(54) in tRNA + (6S)-5,6,7,8-tetrahydrofolate + NADP(+). Catalyzes the folate-dependent formation of 5-methyl-uridine at position 54 (M-5-U54) in all tRNAs. The polypeptide is Methylenetetrahydrofolate--tRNA-(uracil-5-)-methyltransferase TrmFO (Trichormus variabilis (strain ATCC 29413 / PCC 7937) (Anabaena variabilis)).